The sequence spans 134 residues: DNA-binding protein inhibitor ID-2 (134 aa).

A disordered region spans residues 1 to 24 (MKAFSPVRSVRKNSLSDHGLGISR). A phosphoserine mark is found at Ser-14 and Ser-25. The region spanning 23 to 75 (SRSKTPVDDPMSLLYNMNDCYSKLKELVPSIPQNKKVSKMEILQHVIDYILDL) is the bHLH domain. Positions 106-115 (LNTDISILSL) match the Nuclear export signal motif.

As to quaternary structure, interacts with GATA4 and NKX2-5. Interacts with NR0B2. Interacts with CLOCK and BMAL1. Interacts with IFI204. Interacts with NEDD9/HEF1. Interacts with ASB4; this interaction promotes ID2 proteasomal degradation. Post-translationally, ubiquitinated in a ASB4-depedent manner, leading to proteasomal degradation. In terms of processing, phosphorylated in vitro by CDK1, PKA and PKC.

The protein localises to the cytoplasm. It localises to the nucleus. Its function is as follows. Transcriptional regulator (lacking a basic DNA binding domain) which negatively regulates the basic helix-loop-helix (bHLH) transcription factors by forming heterodimers and inhibiting their DNA binding and transcriptional activity. Implicated in regulating a variety of cellular processes, including cellular growth, senescence, differentiation, apoptosis, angiogenesis, and neoplastic transformation. Inhibits skeletal muscle and cardiac myocyte differentiation. Regulates the circadian clock by repressing the transcriptional activator activity of the CLOCK-BMAL1 heterodimer. Restricts the CLOCK and BMAL1 localization to the cytoplasm. Plays a role in both the input and output pathways of the circadian clock: in the input component, is involved in modulating the magnitude of photic entrainment and in the output component, contributes to the regulation of a variety of liver clock-controlled genes involved in lipid metabolism. The protein is DNA-binding protein inhibitor ID-2 (ID2) of Bos taurus (Bovine).